A 615-amino-acid polypeptide reads, in one-letter code: Dihydroxy-acid dehydratase (615 aa).

Aspartate 81 serves as a coordination point for Mg(2+). Cysteine 122 contacts [2Fe-2S] cluster. Residues aspartate 123 and lysine 124 each coordinate Mg(2+). An N6-carboxylysine modification is found at lysine 124. Cysteine 195 lines the [2Fe-2S] cluster pocket. Glutamate 491 serves as a coordination point for Mg(2+). Residue serine 517 is the Proton acceptor of the active site.

Belongs to the IlvD/Edd family. As to quaternary structure, homodimer. Requires [2Fe-2S] cluster as cofactor. It depends on Mg(2+) as a cofactor.

The enzyme catalyses (2R)-2,3-dihydroxy-3-methylbutanoate = 3-methyl-2-oxobutanoate + H2O. It catalyses the reaction (2R,3R)-2,3-dihydroxy-3-methylpentanoate = (S)-3-methyl-2-oxopentanoate + H2O. It functions in the pathway amino-acid biosynthesis; L-isoleucine biosynthesis; L-isoleucine from 2-oxobutanoate: step 3/4. Its pathway is amino-acid biosynthesis; L-valine biosynthesis; L-valine from pyruvate: step 3/4. Its function is as follows. Functions in the biosynthesis of branched-chain amino acids. Catalyzes the dehydration of (2R,3R)-2,3-dihydroxy-3-methylpentanoate (2,3-dihydroxy-3-methylvalerate) into 2-oxo-3-methylpentanoate (2-oxo-3-methylvalerate) and of (2R)-2,3-dihydroxy-3-methylbutanoate (2,3-dihydroxyisovalerate) into 2-oxo-3-methylbutanoate (2-oxoisovalerate), the penultimate precursor to L-isoleucine and L-valine, respectively. This is Dihydroxy-acid dehydratase from Pseudoalteromonas atlantica (strain T6c / ATCC BAA-1087).